Reading from the N-terminus, the 876-residue chain is AP-5 complex subunit beta-1 (876 aa).

As to quaternary structure, probably part of the adaptor protein complex 5 (AP-5), a tetramer composed of AP5B1, AP5M1, AP5S1 and AP5Z1. Interacts with ZFYVE26 and SPG11.

As part of AP-5, a probable fifth adaptor protein complex, it may be involved in endosomal transport. This chain is AP-5 complex subunit beta-1 (Ap5b1), found in Rattus norvegicus (Rat).